The following is a 490-amino-acid chain: Glutamyl-tRNA(Gln) amidotransferase subunit A (490 aa).

Catalysis depends on charge relay system residues lysine 78 and serine 153. The active-site Acyl-ester intermediate is the serine 177.

This sequence belongs to the amidase family. GatA subfamily. Heterotrimer of A, B and C subunits.

The catalysed reaction is L-glutamyl-tRNA(Gln) + L-glutamine + ATP + H2O = L-glutaminyl-tRNA(Gln) + L-glutamate + ADP + phosphate + H(+). Allows the formation of correctly charged Gln-tRNA(Gln) through the transamidation of misacylated Glu-tRNA(Gln) in organisms which lack glutaminyl-tRNA synthetase. The reaction takes place in the presence of glutamine and ATP through an activated gamma-phospho-Glu-tRNA(Gln). In Bdellovibrio bacteriovorus (strain ATCC 15356 / DSM 50701 / NCIMB 9529 / HD100), this protein is Glutamyl-tRNA(Gln) amidotransferase subunit A.